The chain runs to 348 residues: Glucan endo-1,3-beta-glucosidase, basic isoform (348 aa).

Glutamine 1 is subject to Pyrrolidone carboxylic acid. Glutamate 95 serves as the catalytic Proton donor. The active-site Nucleophile is glutamate 240. Positions 317–348 are cleaved as a propeptide — removed in mature form; that stretch reads AQRMQRLLLMSSMQHIPLRVTCKLEPSSQSLL.

The protein belongs to the glycosyl hydrolase 17 family.

It localises to the vacuole. The enzyme catalyses Hydrolysis of (1-&gt;3)-beta-D-glucosidic linkages in (1-&gt;3)-beta-D-glucans.. Functionally, implicated in the defense of plants against pathogens. The chain is Glucan endo-1,3-beta-glucosidase, basic isoform from Phaseolus vulgaris (Kidney bean).